Here is a 384-residue protein sequence, read N- to C-terminus: DNA replication and repair protein RecF (384 aa).

43-50 (GENGSGKT) contributes to the ATP binding site.

This sequence belongs to the RecF family.

The protein localises to the cytoplasm. Functionally, the RecF protein is involved in DNA metabolism; it is required for DNA replication and normal SOS inducibility. RecF binds preferentially to single-stranded, linear DNA. It also seems to bind ATP. This Brucella abortus (strain 2308) protein is DNA replication and repair protein RecF.